The primary structure comprises 254 residues: Phosphoribosylaminoimidazole-succinocarboxamide synthase (254 aa).

Belongs to the SAICAR synthetase family.

It catalyses the reaction 5-amino-1-(5-phospho-D-ribosyl)imidazole-4-carboxylate + L-aspartate + ATP = (2S)-2-[5-amino-1-(5-phospho-beta-D-ribosyl)imidazole-4-carboxamido]succinate + ADP + phosphate + 2 H(+). Its pathway is purine metabolism; IMP biosynthesis via de novo pathway; 5-amino-1-(5-phospho-D-ribosyl)imidazole-4-carboxamide from 5-amino-1-(5-phospho-D-ribosyl)imidazole-4-carboxylate: step 1/2. In Bartonella quintana (strain Toulouse) (Rochalimaea quintana), this protein is Phosphoribosylaminoimidazole-succinocarboxamide synthase.